Reading from the N-terminus, the 494-residue chain is MTMALLGTLLLLALFGRSQGKNEELSLYHHLFDNYDPECRPVRRPEDTVTITLKVTLTNLISLNEKEETLTTSVWIGIEWQDYRLNFSKDDFAGVEILRVPSEHVWLPEIVLENNIDGQFGVAYDCNVLVYEGGSVSWLPPAIYRSTCAVEVTYFPFDWQNCSLIFRSQTYNAEEVELIFAVDDDGNAINKIDIDTAAFTENGEWAIDYCPGMIRHYEGGSTEDPGETDVIYTLIIRRKPLFYVINIIVPCVLISGLVLLAYFLPAQAGGQKCTVSINVLLAQTVFLFLIAQKIPETSLSVPLLGRYLIFVMVVATLIVMNCVIVLNVSLRTPTTHATSPRLRQILLELLPRLLGLSPPPEDPGAASPARRASSVGILLRAEELILKKPRSELVFEGQRHRHGTWTAAALCQNLGAAAPEVRCCVDAVNFVAESTRDQEATGEELSDWVRMGKALDNVCFWAALVLFSVGSTLIFLGGYFNQVPDLPYPPCIQP.

The first 20 residues, M1–G20, serve as a signal peptide directing secretion. Over K21–K239 the chain is Extracellular. N-linked (GlcNAc...) asparagine glycosylation is found at N86 and N161. C148 and C162 are disulfide-bonded. A helical transmembrane segment spans residues P240 to L264. Over P265–K272 the chain is Cytoplasmic. A helical transmembrane segment spans residues C273 to A291. Topologically, residues Q292–R306 are extracellular. A helical transmembrane segment spans residues Y307–V328. Residues S329–N457 lie on the Cytoplasmic side of the membrane. A helical transmembrane segment spans residues V458 to N481. Topologically, residues Q482–P494 are extracellular.

It belongs to the ligand-gated ion channel (TC 1.A.9) family. Acetylcholine receptor (TC 1.A.9.1) subfamily. Epsilon/CHRNE sub-subfamily. As to quaternary structure, pentamer of two alpha chains, and one each of the beta, delta, and gamma (in immature muscle) or epsilon (in mature muscle) chains. The muscle heteropentamer composed of alpha-1, beta-1, delta, epsilon subunits interacts with the alpha-conotoxin ImII.

It localises to the postsynaptic cell membrane. The protein resides in the cell membrane. The catalysed reaction is K(+)(in) = K(+)(out). It carries out the reaction Na(+)(in) = Na(+)(out). Functionally, after binding acetylcholine, the AChR responds by an extensive change in conformation that affects all subunits and leads to opening of an ion-conducting channel across the plasma membrane. This chain is Acetylcholine receptor subunit epsilon (Chrne), found in Rattus norvegicus (Rat).